Consider the following 834-residue polypeptide: DIS3-like exonuclease 2 (834 aa).

Residues 1 to 23 show a composition bias toward polar residues; the sequence is MHNSEFLSPVQSGTQRGTNRSIL. Positions 1-35 are disordered; sequence MHNSEFLSPVQSGTQRGTNRSILNNKKSGKGKKKS. Mg(2+)-binding residues include D354 and D363.

Belongs to the RNR ribonuclease family. DIS3L2 subfamily. The cofactor is Mg(2+). Mn(2+) is required as a cofactor.

It is found in the cytoplasm. The protein localises to the P-body. 3'-5'-exoribonuclease that specifically recognizes RNAs polyuridylated at their 3' end and mediates their degradation. Component of an exosome-independent RNA degradation pathway that mediates degradation of both mRNAs and miRNAs that have been polyuridylated by a terminal uridylyltransferase. Essential for correct mitosis, and negatively regulates cell proliferation. This chain is DIS3-like exonuclease 2, found in Xenopus tropicalis (Western clawed frog).